Consider the following 465-residue polypeptide: 3-isopropylmalate dehydratase large subunit (465 aa).

C347, C407, and C410 together coordinate [4Fe-4S] cluster. Positions 417-443 (TLKPGERSASTSNRNFEGRQGKGGRTH) are disordered.

Belongs to the aconitase/IPM isomerase family. LeuC type 1 subfamily. In terms of assembly, heterodimer of LeuC and LeuD. Requires [4Fe-4S] cluster as cofactor.

It catalyses the reaction (2R,3S)-3-isopropylmalate = (2S)-2-isopropylmalate. It functions in the pathway amino-acid biosynthesis; L-leucine biosynthesis; L-leucine from 3-methyl-2-oxobutanoate: step 2/4. Functionally, catalyzes the isomerization between 2-isopropylmalate and 3-isopropylmalate, via the formation of 2-isopropylmaleate. The sequence is that of 3-isopropylmalate dehydratase large subunit from Thermobifida fusca (strain YX).